The chain runs to 443 residues: Ribosomal protein uS12 methylthiotransferase RimO (443 aa).

The region spanning 6–116 (PRVGMISLGC…VVNAVHDVVP (111 aa)) is the MTTase N-terminal domain. The [4Fe-4S] cluster site is built by cysteine 15, cysteine 51, cysteine 80, cysteine 149, cysteine 153, and cysteine 156. Residues 135 to 373 (LTPRHYAYLK…MAHQQAISAA (239 aa)) form the Radical SAM core domain. The 68-residue stretch at 376-443 (QMKIGKEIEV…DEYDLWAEML (68 aa)) folds into the TRAM domain.

It belongs to the methylthiotransferase family. RimO subfamily. It depends on [4Fe-4S] cluster as a cofactor.

Its subcellular location is the cytoplasm. The enzyme catalyses L-aspartate(89)-[ribosomal protein uS12]-hydrogen + (sulfur carrier)-SH + AH2 + 2 S-adenosyl-L-methionine = 3-methylsulfanyl-L-aspartate(89)-[ribosomal protein uS12]-hydrogen + (sulfur carrier)-H + 5'-deoxyadenosine + L-methionine + A + S-adenosyl-L-homocysteine + 2 H(+). Its function is as follows. Catalyzes the methylthiolation of an aspartic acid residue of ribosomal protein uS12. In Pseudomonas syringae pv. tomato (strain ATCC BAA-871 / DC3000), this protein is Ribosomal protein uS12 methylthiotransferase RimO.